The sequence spans 212 residues: ATP synthase subunit 5, mitochondrial (212 aa).

Residues 1–17 constitute a mitochondrion transit peptide; the sequence is MFNRVFTRSFASSLRAA.

The protein belongs to the ATPase delta chain family. As to quaternary structure, F-type ATPases have 2 components, CF(1) - the catalytic core - and CF(0) - the membrane proton channel. CF(1) has five subunits: alpha(3), beta(3), gamma(1), delta(1), epsilon(1). CF(0) has three main subunits: a, b and c.

The protein localises to the mitochondrion. The protein resides in the mitochondrion inner membrane. Its function is as follows. Mitochondrial membrane ATP synthase (F(1)F(0) ATP synthase or Complex V) produces ATP from ADP in the presence of a proton gradient across the membrane which is generated by electron transport complexes of the respiratory chain. F-type ATPases consist of two structural domains, F(1) - containing the extramembraneous catalytic core and F(0) - containing the membrane proton channel, linked together by a central stalk and a peripheral stalk. During catalysis, ATP synthesis in the catalytic domain of F(1) is coupled via a rotary mechanism of the central stalk subunits to proton translocation. Part of the complex F(0) domain and the peripheric stalk, which acts as a stator to hold the catalytic alpha(3)beta(3) subcomplex and subunit a/ATP6 static relative to the rotary elements. This is ATP synthase subunit 5, mitochondrial (ATP5) from Saccharomyces cerevisiae (strain ATCC 204508 / S288c) (Baker's yeast).